The following is a 378-amino-acid chain: MKAVTYQGIKNVVVKDVPDPKIEKSDDMIIKVTSTAICGSDLHLIHGFIPNMQEDYVIGHEPMGIVEEVGSGVTKLKKGDRVIIPFNIACGECFFCKNQLESQCDQSNDNGEMGAYFGYSGQTGGYPGGQAEYLRVPFANFTHFKIPESCEEPDEKLSVIADAMTTGFWSVDNAGVKKGDTVIVLGCGPVGLFAQKFCWLKGAKRVIAVDYVNYRLQHAKRTNKVEIVNFEDHENTGNYLKEITKGGADVVIDAVGMDGKMSDLEFLASGLKLHGGTMSALVIASQAVRKGGTIQITGVYGGRYNGFPLGDIMQRNVNIRSGQAPVIHYMPYMFELVSTGKIDPGDVVSHVLPLSEAKHGYDIFDSKMDDCIKVVLKP.

Zn(2+)-binding residues include Cys38, His60, Cys90, Cys93, Cys96, and Cys104.

This sequence belongs to the zinc-containing alcohol dehydrogenase family. Class-III subfamily. Zn(2+) serves as cofactor.

This is an uncharacterized protein from Bacillus subtilis (strain 168).